The chain runs to 131 residues: MTSDPIADMLTRVRNAIQARHPKVDVPASKLKAEIARILKEEGYITNFKVAEEGAKKTIKIYLKYANNNSPVISAIERVSRPGCRVYVGQTDIPRVLGGMGINILTTPRGVMTGRDAHKEHLGGEILCRVW.

This sequence belongs to the universal ribosomal protein uS8 family. In terms of assembly, part of the 30S ribosomal subunit. Contacts proteins S5 and S12.

In terms of biological role, one of the primary rRNA binding proteins, it binds directly to 16S rRNA central domain where it helps coordinate assembly of the platform of the 30S subunit. The sequence is that of Small ribosomal subunit protein uS8 from Solibacter usitatus (strain Ellin6076).